A 60-amino-acid polypeptide reads, in one-letter code: Cytotoxin 2 (60 aa).

4 cysteine pairs are disulfide-bonded: Cys3/Cys21, Cys14/Cys38, Cys42/Cys53, and Cys54/Cys59.

The protein belongs to the three-finger toxin family. Short-chain subfamily. Type IA cytotoxin sub-subfamily. In terms of assembly, monomer in solution; Homodimer and oligomer in the presence of negatively charged lipids forming a pore with a size ranging between 20 and 30 Angstroms. Expressed by the venom gland.

It is found in the secreted. It localises to the target cell membrane. Shows cytolytic activity on many different cells by forming pore in lipid membranes. In vivo, increases heart rate or kills the animal by cardiac arrest. In addition, it binds to heparin with high affinity, interacts with Kv channel-interacting protein 1 (KCNIP1) in a calcium-independent manner, and binds to integrin alpha-V/beta-3 (ITGAV/ITGB3) with moderate affinity. This is Cytotoxin 2 from Naja mossambica (Mozambique spitting cobra).